The following is a 134-amino-acid chain: Transcription antitermination protein NusB (134 aa).

Belongs to the NusB family.

Involved in transcription antitermination. Required for transcription of ribosomal RNA (rRNA) genes. Binds specifically to the boxA antiterminator sequence of the ribosomal RNA (rrn) operons. This is Transcription antitermination protein NusB from Syntrophomonas wolfei subsp. wolfei (strain DSM 2245B / Goettingen).